We begin with the raw amino-acid sequence, 677 residues long: Envelope glycoprotein (677 aa).

A signal peptide spans 1–33; sequence MGSGYQLLQLPRERFRKTSFLVWVIILFQRAIS. Residues 34–651 are Extracellular-facing; the sequence is MPLGIVTNST…DLNLWTGWRQ (618 aa). Residue N41 is glycosylated (N-linked (GlcNAc...) asparagine; by host). Intrachain disulfides connect C54-C610, C109-C136, C122-C148, C512-C557, and C602-C609. The interval 55 to 202 is receptor-binding; the sequence is RDKLSSTSQL…HFWKATPAHE (148 aa). N205, N239, N258, N269, N297, N317, N318, N339, N406, N420, N435, and N463 each carry an N-linked (GlcNAc...) asparagine; by host glycan. The interval 306 to 486 is mucin-like region; that stretch reads NLHFQILSTH…PSQPGFTINT (181 aa). The span at 315–326 shows a compositional bias: polar residues; the sequence is HTNNSSDQSPAG. 3 disordered regions span residues 315–349, 370–482, and 489–508; these read HTNN…TDSP, NGET…QPGF, and KVAD…RQNT. 2 stretches are compositionally biased toward polar residues: residues 370-421 and 429-472; these read NGET…ASNE and NPIQ…TSPG. The interval 525 to 540 is fusion peptide; that stretch reads GAAVGLAWIPYFGPAA. Residues 555-596 are a coiled coil; that stretch reads LICGLRQLANETTQALQLFLRATTELRTYSLLNRKAIDFLLQ. N-linked (GlcNAc...) asparagine; by host glycosylation is present at N564. Residues 616–635 are a coiled coil; sequence WTKNITDEINQIKHDFIDNP. N619 carries N-linked (GlcNAc...) asparagine; by host glycosylation. The helical transmembrane segment at 652–672 threads the bilayer; the sequence is WIPAGIGIIGVIIAIIALLCI. 2 S-palmitoyl cysteine; by host lipidation sites follow: C671 and C673. Residues 673-677 lie on the Cytoplasmic side of the membrane; the sequence is CKILC.

This sequence belongs to the filoviruses glycoprotein family. In terms of assembly, homotrimer; each monomer consists of a GP1 and a GP2 subunit linked by disulfide bonds. The resulting peplomers (GP1,2) protrude from the virus surface as spikes. Interacts with host integrin alpha-V/ITGAV. Interacts with host CLEC10A. Binds also to host CD209 and CLEC4M/DC-SIGN(R). Interacts with host FOLR1. Interacts with BST2; this interaction inhibits the antiviral effect of BST2 and this allows viral release from infected cells. Interacts with host FCN1; this interaction enhances viral entry. Interacts with host TLR4; this interaction induces cell death in T-lymphocytes or proinflammatory cytokines and SOCS1 production in monocytes. Interacts with host entry receptor NPC1. As to quaternary structure, GP1 and GP2delta are part of GP1,2delta soluble complexes released by ectodomain shedding. The signal peptide region modulates GP's high mannose glycosylation, thereby determining the efficiency of the interactions with DC-SIGN(R). Post-translationally, N-glycosylated. In terms of processing, O-glycosylated in the mucin-like region. Palmitoylation of GP2 is not required for its function. Post-translationally, specific enzymatic cleavages in vivo yield mature proteins. The precursor is processed into GP1 and GP2 by host cell furin in the trans Golgi, and maybe by other host proteases, to yield the mature GP1 and GP2 proteins. The cleavage site corresponds to the furin optimal cleavage sequence [KR]-X-[KR]-R. This cleavage does not seem to be required for function. After the internalization of the virus into cell endosomes, GP1 C-terminus is removed by the endosomal proteases cathepsin B, cathepsin L, or both, leaving a 19-kDa N-terminal fragment which is further digested by cathepsin B. Proteolytic processing of GP1,2 by host ADAM17 can remove the transmembrane anchor of GP2 and leads to shedding of complexes consisting in GP1 and truncated GP2 (GP1,2delta).

Its subcellular location is the virion membrane. It is found in the host cell membrane. The protein resides in the secreted. Its function is as follows. Trimeric GP1,2 complexes form the virion surface spikes and mediate the viral entry processes, with GP1 acting as the receptor-binding subunit and GP2 as the membrane fusion subunit. At later times of infection, down-regulates the expression of various host cell surface molecules that are essential for immune surveillance and cell adhesion. Down-modulates several integrins including ITGA1, ITGA2, ITGA3, ITGA4, ITGA5, ITGA6, ITGAV and ITGB1. This decrease in cell adhesion molecules may lead to cell detachment, contributing to the disruption of blood vessel integrity and hemorrhages developed during infection (cytotoxicity). Interacts with host TLR4 and thereby stimulates the differentiation and activation of monocytes leading to bystander death of T-lymphocytes. Down-regulates as well the function of host natural killer cells. Counteracts the antiviral effect of host BST2/tetherin that restricts release of progeny virions from infected cells. However, cooperates with VP40 and host BST2 to activate canonical NF-kappa-B pathway in a manner dependent on neddylation. Functionally, functions as a decoy for anti-GP1,2 antibodies thereby contributing to viral immune evasion. Interacts and activates host macrophages and dendritic cells inducing up-regulation of cytokine transcription. This effect is mediated throught activation of host TLR4. In terms of biological role, responsible for binding to the receptor(s) on target cells. Interacts with CD209/DC-SIGN and CLEC4M/DC-SIGNR which act as cofactors for virus entry into dendritic cells (DCs) and endothelial cells. Binding to the macrophage specific lectin CLEC10A also seems to enhance virus infectivity. Interaction with FOLR1/folate receptor alpha may be a cofactor for virus entry in some cell types, although results are contradictory. Members of the Tyro3 receptor tyrosine kinase family also seem to be cell entry factors in filovirus infection. Once attached, the virions are internalized through clathrin-dependent endocytosis and/or macropinocytosis. After internalization of the virus into the endosomes of the host cell, proteolysis of GP1 by two cysteine proteases, CTSB/cathepsin B and CTSL/cathepsin L removes the glycan cap and allows GP1 binding to the host entry receptor NPC1. NPC1-binding, Ca(2+) and acidic pH induce a conformational change of GP2, which unmasks its fusion peptide and permit membranes fusion. Acts as a class I viral fusion protein. Under the current model, the protein has at least 3 conformational states: pre-fusion native state, pre-hairpin intermediate state, and post-fusion hairpin state. During viral and target cell membrane fusion, the coiled coil regions (heptad repeats) assume a trimer-of-hairpins structure, positioning the fusion peptide in close proximity to the C-terminal region of the ectodomain. The formation of this structure appears to drive apposition and subsequent fusion of viral and target cell membranes. Responsible for penetration of the virus into the cell cytoplasm by mediating the fusion of the membrane of the endocytosed virus particle with the endosomal membrane. Low pH in endosomes induces an irreversible conformational change in GP2, releasing the fusion hydrophobic peptide. This Homo sapiens (Human) protein is Envelope glycoprotein (GP).